Reading from the N-terminus, the 99-residue chain is A-type ATP synthase subunit F (99 aa).

This sequence belongs to the V-ATPase F subunit family. Has multiple subunits with at least A(3), B(3), C, D, E, F, H, I and proteolipid K(x).

It is found in the cell membrane. Its function is as follows. Component of the A-type ATP synthase that produces ATP from ADP in the presence of a proton gradient across the membrane. In Methanococcus maripaludis (strain C5 / ATCC BAA-1333), this protein is A-type ATP synthase subunit F.